The sequence spans 62 residues: Conotoxin TxIC (62 aa).

Residues 1-22 (MHCLPIFVILLLLTASGPSVDA) form the signal peptide. The propeptide occupies 23-47 (QLKTKDDVPLSSFRDHAKSTLRRLQ). Disulfide bonds link cysteine 52–cysteine 58 and cysteine 53–cysteine 61. Proline 60 bears the 4-hydroxyproline mark. Cysteine 61 carries the post-translational modification Cysteine amide.

The protein belongs to the conotoxin A superfamily. Expressed by the venom duct.

The protein localises to the secreted. This Conus textile (Cloth-of-gold cone) protein is Conotoxin TxIC.